The sequence spans 73 residues: uncharacterized protein (73 aa).

Residues 48 to 73 (AKEPEKKTPSMEAKATSLSPNKASAS) form a disordered region. A compositionally biased stretch (polar residues) spans 63–73 (TSLSPNKASAS).

This is an uncharacterized protein from Saccharomyces cerevisiae (strain ATCC 204508 / S288c) (Baker's yeast).